Consider the following 131-residue polypeptide: Fluoride-specific ion channel FluC 2 (131 aa).

Helical transmembrane passes span 4–24, 46–66, 71–91, and 105–125; these read IIQG…ARFW, VSGA…HGVF, PWLF…SFAL, and AISN…LGFA. G81 and T84 together coordinate Na(+).

It belongs to the fluoride channel Fluc/FEX (TC 1.A.43) family.

Its subcellular location is the cell inner membrane. The enzyme catalyses fluoride(in) = fluoride(out). With respect to regulation, na(+) is not transported, but it plays an essential structural role and its presence is essential for fluoride channel function. In terms of biological role, fluoride-specific ion channel. Important for reducing fluoride concentration in the cell, thus reducing its toxicity. This chain is Fluoride-specific ion channel FluC 2, found in Rhodopseudomonas palustris (strain BisB18).